Consider the following 233-residue polypeptide: Large ribosomal subunit protein uL1 (233 aa).

Belongs to the universal ribosomal protein uL1 family. As to quaternary structure, part of the 50S ribosomal subunit.

Binds directly to 23S rRNA. The L1 stalk is quite mobile in the ribosome, and is involved in E site tRNA release. Functionally, protein L1 is also a translational repressor protein, it controls the translation of the L11 operon by binding to its mRNA. The polypeptide is Large ribosomal subunit protein uL1 (Polynucleobacter necessarius subsp. necessarius (strain STIR1)).